The sequence spans 312 residues: Olfactory receptor 1F1 (312 aa).

The Extracellular portion of the chain corresponds to 1 to 25 (MSGTNQSSVSEFLLLGLSRQPQQQH). The N-linked (GlcNAc...) asparagine glycan is linked to Asn5. The helical transmembrane segment at 26–49 (LLFVFFLSMYLATVLGNLLIILSV) threads the bilayer. At 50 to 57 (SIDSCLHT) the chain is on the cytoplasmic side. The helical transmembrane segment at 58-79 (PMYFFLSNLSFVDICFSFTTVP) threads the bilayer. Topologically, residues 80–100 (KMLANHILETQTISFCGCLTQ) are extracellular. Cysteines 97 and 189 form a disulfide. Residues 101-120 (MYFVFMFVDMDNFLLAVMAY) form a helical membrane-spanning segment. Residues 121–139 (DHFVAVCHPLHYTAKMTHQ) lie on the Cytoplasmic side of the membrane. Residues 140-158 (LCALLVAGLWVVANLNVLL) form a helical membrane-spanning segment. The Extracellular portion of the chain corresponds to 159–196 (HTLLMAPLSFCADNAITHFFCDVTPLLKLSCSDTHLNE). A helical transmembrane segment spans residues 197–219 (VIILSEGALVMITPFLCILASYM). Topologically, residues 220–236 (HITCTVLKVPSTKGRWK) are cytoplasmic. Residues 237–259 (AFSTCGSHLAVVLLFYSTIIAVY) form a helical membrane-spanning segment. Residues 260–272 (FNPLSSHSAEKDT) are Extracellular-facing. Residues 273–292 (MATVLYTVVTPMLNPFIYSL) form a helical membrane-spanning segment. Residues 293–312 (RNRYLKGALKKVVGRVVFSV) are Cytoplasmic-facing.

It belongs to the G-protein coupled receptor 1 family.

It localises to the cell membrane. Its function is as follows. Odorant receptor. In Homo sapiens (Human), this protein is Olfactory receptor 1F1 (OR1F1).